Here is a 385-residue protein sequence, read N- to C-terminus: 8-amino-7-oxononanoate synthase (385 aa).

Arg-21 is a substrate binding site. 108–109 contributes to the pyridoxal 5'-phosphate binding site; that stretch reads GY. His-133 lines the substrate pocket. Residues Ser-179, His-207, and Thr-233 each coordinate pyridoxal 5'-phosphate. Residue Lys-236 is modified to N6-(pyridoxal phosphate)lysine. Thr-350 contributes to the substrate binding site.

The protein belongs to the class-II pyridoxal-phosphate-dependent aminotransferase family. BioF subfamily. In terms of assembly, homodimer. Requires pyridoxal 5'-phosphate as cofactor.

The catalysed reaction is 6-carboxyhexanoyl-[ACP] + L-alanine + H(+) = (8S)-8-amino-7-oxononanoate + holo-[ACP] + CO2. The protein operates within cofactor biosynthesis; biotin biosynthesis. Functionally, catalyzes the decarboxylative condensation of pimeloyl-[acyl-carrier protein] and L-alanine to produce 8-amino-7-oxononanoate (AON), [acyl-carrier protein], and carbon dioxide. This chain is 8-amino-7-oxononanoate synthase, found in Pectobacterium atrosepticum (strain SCRI 1043 / ATCC BAA-672) (Erwinia carotovora subsp. atroseptica).